A 407-amino-acid polypeptide reads, in one-letter code: Phosphopentomutase (407 aa).

Positions 10, 306, 311, 347, 348, and 359 each coordinate Mn(2+).

Belongs to the phosphopentomutase family. Mn(2+) is required as a cofactor.

The protein resides in the cytoplasm. The enzyme catalyses 2-deoxy-alpha-D-ribose 1-phosphate = 2-deoxy-D-ribose 5-phosphate. The catalysed reaction is alpha-D-ribose 1-phosphate = D-ribose 5-phosphate. Its pathway is carbohydrate degradation; 2-deoxy-D-ribose 1-phosphate degradation; D-glyceraldehyde 3-phosphate and acetaldehyde from 2-deoxy-alpha-D-ribose 1-phosphate: step 1/2. In terms of biological role, isomerase that catalyzes the conversion of deoxy-ribose 1-phosphate (dRib-1-P) and ribose 1-phosphate (Rib-1-P) to deoxy-ribose 5-phosphate (dRib-5-P) and ribose 5-phosphate (Rib-5-P), respectively. This is Phosphopentomutase from Sodalis glossinidius (strain morsitans).